Reading from the N-terminus, the 281-residue chain is Undecaprenyl-diphosphatase (281 aa).

Transmembrane regions (helical) follow at residues 45-65, 86-106, 114-134, 148-168, 196-216, 224-244, and 256-276; these read AFTN…VVVI, WQLW…GLIF, FQNF…FIYV, LVSL…LSLI, FFLG…KFIV, SQLF…LYVI, and FTFF…YGLM.

This sequence belongs to the UppP family.

The protein resides in the cell membrane. It catalyses the reaction di-trans,octa-cis-undecaprenyl diphosphate + H2O = di-trans,octa-cis-undecaprenyl phosphate + phosphate + H(+). Catalyzes the dephosphorylation of undecaprenyl diphosphate (UPP). Confers resistance to bacitracin. This is Undecaprenyl-diphosphatase from Streptococcus mutans serotype c (strain ATCC 700610 / UA159).